Here is a 231-residue protein sequence, read N- to C-terminus: Ribonuclease HI (231 aa).

Residues 1–146 enclose the RNase H type-1 domain; that stretch reads MRERAVAACD…ADRAASQAAV (146 aa). Mg(2+) contacts are provided by Asp-10, Glu-50, Asp-72, and Asp-138. 2 stretches are compositionally biased toward low complexity: residues 148–157 and 166–181; these read QEAAGSALGS and VPAARRAPRRGSSGAA. Disordered regions lie at residues 148 to 192 and 212 to 231; these read QEAA…SART and PIAKNDQGWGHPECRTVAAG.

Belongs to the RNase H family. As to quaternary structure, monomer. It depends on Mg(2+) as a cofactor.

It localises to the cytoplasm. It catalyses the reaction Endonucleolytic cleavage to 5'-phosphomonoester.. In terms of biological role, endonuclease that specifically degrades the RNA of RNA-DNA hybrids. In Streptomyces coelicolor (strain ATCC BAA-471 / A3(2) / M145), this protein is Ribonuclease HI (rnhA).